The primary structure comprises 177 residues: Large ribosomal subunit protein uL6 (177 aa).

Belongs to the universal ribosomal protein uL6 family. Part of the 50S ribosomal subunit.

This protein binds to the 23S rRNA, and is important in its secondary structure. It is located near the subunit interface in the base of the L7/L12 stalk, and near the tRNA binding site of the peptidyltransferase center. The chain is Large ribosomal subunit protein uL6 from Rickettsia felis (strain ATCC VR-1525 / URRWXCal2) (Rickettsia azadi).